The following is a 495-amino-acid chain: N-succinylglutamate 5-semialdehyde dehydrogenase (495 aa).

228–233 (GSYATG) lines the NAD(+) pocket. Active-site residues include glutamate 251 and cysteine 285.

This sequence belongs to the aldehyde dehydrogenase family. AstD subfamily.

The catalysed reaction is N-succinyl-L-glutamate 5-semialdehyde + NAD(+) + H2O = N-succinyl-L-glutamate + NADH + 2 H(+). Its pathway is amino-acid degradation; L-arginine degradation via AST pathway; L-glutamate and succinate from L-arginine: step 4/5. In terms of biological role, catalyzes the NAD-dependent reduction of succinylglutamate semialdehyde into succinylglutamate. The protein is N-succinylglutamate 5-semialdehyde dehydrogenase of Legionella pneumophila (strain Corby).